A 93-amino-acid polypeptide reads, in one-letter code: Precursor of CEP13 (93 aa).

The N-terminal stretch at 1 to 27 is a signal peptide; sequence MARPRISISMICLLILIVGFVLQSSQA. A propeptide spanning residues 28 to 78 is cleaved from the precursor; that stretch reads RKVLVPYGTSKGLFLSALPKGNVPPSGPSDKGHTSPPDDTDQRMVPENSPE. A disordered region spans residues 45 to 93; it reads LPKGNVPPSGPSDKGHTSPPDDTDQRMVPENSPEIYRRLESVPSPGVGH. Pro87 and Pro89 each carry hydroxyproline.

Belongs to the C-terminally encoded plant signaling peptide (CEP) family. As to quaternary structure, interacts with CEP receptors (e.g. CEPR1 and CEPR2). Post-translationally, the mature small signaling peptide is generated by proteolytic processing of the longer precursor.

Its subcellular location is the secreted. It localises to the extracellular space. The protein resides in the apoplast. In terms of biological role, extracellular signaling peptide that may regulate primary root growth rate and systemic nitrogen (N)-demand signaling. This Arabidopsis thaliana (Mouse-ear cress) protein is Precursor of CEP13.